The primary structure comprises 395 residues: Probable isocitrate dehydrogenase [NAD] gamma 2, mitochondrial (395 aa).

A mitochondrion-targeting transit peptide spans 1 to 25 (MLAAGSCSVRTILQPALLLGHSREV). Citrate is bound at residue threonine 117. Substrate is bound by residues arginine 133, arginine 164, and aspartate 251. Aspartate 251 provides a ligand contact to Mn(2+). Residue asparagine 321 coordinates ADP.

Belongs to the isocitrate and isopropylmalate dehydrogenases family. As to quaternary structure, heterooligomer of subunits alpha (IDH3A), beta (IDH3B), and gamma (IDH3G) in the apparent ratio of 2:1:1. The heterodimer containing one IDH3A and one IDH3B subunit and the heterodimer containing one IDH3A and one IDH3G subunit assemble into a heterotetramer (which contains two subunits of IDH3A, one of IDH3B and one of IDH3G) and further into the heterooctamer. Mg(2+) is required as a cofactor. It depends on Mn(2+) as a cofactor.

Its subcellular location is the mitochondrion. Its activity is regulated as follows. The heterotetramer and the heterodimer composed of IDH3A and IDH3G subunits can be allosterically activated by citrate (CIT) or/and ADP, and the two activators can act independently or synergistically. The heterodimer composed of IDH3A and IDH3B subunits cannot be allosterically regulated and the allosteric regulation of the heterotetramer is through the IDH3G subunit and not the IDH3B subunit. The IDH3G subunit contains the allosteric site which consists of a CIT-binding site and an ADP-binding site, and the binding of CIT and ADP causes conformational changes at the allosteric site which are transmitted to the active site in the catalytic subunit (IDH3A) through a cascade of conformational changes at the heterodimer interface, leading to stabilization of the isocitrate-binding at the active site and thus activation of the enzyme. ATP can activate the heterotetramer and the heterodimer composed of IDH3A and IDH3G subunits at low concentrations but inhibits their activities at high concentrations, whereas ATP exhibits only inhibitory effect on the heterodimer composed of IDH3A and IDH3B subunits. Functionally, regulatory subunit which plays a role in the allosteric regulation of the enzyme catalyzing the decarboxylation of isocitrate (ICT) into alpha-ketoglutarate. The heterodimer composed of the alpha (IDH3A) and beta (IDH3B) subunits and the heterodimer composed of the alpha (IDH3A) and gamma (IDH3G) subunits, have considerable basal activity but the full activity of the heterotetramer (containing two subunits of IDH3A, one of IDH3B and one of IDH3G) requires the assembly and cooperative function of both heterodimers. The protein is Probable isocitrate dehydrogenase [NAD] gamma 2, mitochondrial of Rattus norvegicus (Rat).